A 608-amino-acid polypeptide reads, in one-letter code: 1-deoxy-D-xylulose-5-phosphate synthase (608 aa).

Residues His-80 and 121 to 123 each bind thiamine diphosphate; that span reads GHS. Asp-152 serves as a coordination point for Mg(2+). Thiamine diphosphate contacts are provided by residues 153-154, Asn-181, Tyr-282, and Glu-357; that span reads GA. Asn-181 is a Mg(2+) binding site.

This sequence belongs to the transketolase family. DXPS subfamily. In terms of assembly, homodimer. The cofactor is Mg(2+). Requires thiamine diphosphate as cofactor.

It catalyses the reaction D-glyceraldehyde 3-phosphate + pyruvate + H(+) = 1-deoxy-D-xylulose 5-phosphate + CO2. The protein operates within metabolic intermediate biosynthesis; 1-deoxy-D-xylulose 5-phosphate biosynthesis; 1-deoxy-D-xylulose 5-phosphate from D-glyceraldehyde 3-phosphate and pyruvate: step 1/1. Functionally, catalyzes the acyloin condensation reaction between C atoms 2 and 3 of pyruvate and glyceraldehyde 3-phosphate to yield 1-deoxy-D-xylulose-5-phosphate (DXP). In Buchnera aphidicola subsp. Acyrthosiphon pisum (strain 5A), this protein is 1-deoxy-D-xylulose-5-phosphate synthase.